Consider the following 206-residue polypeptide: Ribosomal RNA large subunit methyltransferase E (206 aa).

The S-adenosyl-L-methionine site is built by Gly-61, Trp-63, Asp-81, Asp-97, and Asp-122. Residue Lys-162 is the Proton acceptor of the active site.

It belongs to the class I-like SAM-binding methyltransferase superfamily. RNA methyltransferase RlmE family.

It is found in the cytoplasm. It catalyses the reaction uridine(2552) in 23S rRNA + S-adenosyl-L-methionine = 2'-O-methyluridine(2552) in 23S rRNA + S-adenosyl-L-homocysteine + H(+). In terms of biological role, specifically methylates the uridine in position 2552 of 23S rRNA at the 2'-O position of the ribose in the fully assembled 50S ribosomal subunit. This Neisseria gonorrhoeae (strain NCCP11945) protein is Ribosomal RNA large subunit methyltransferase E.